The primary structure comprises 63 residues: Large ribosomal subunit protein bL35 (63 aa).

The protein belongs to the bacterial ribosomal protein bL35 family.

The protein is Large ribosomal subunit protein bL35 of Campylobacter fetus subsp. fetus (strain 82-40).